The sequence spans 323 residues: Zinc finger C2HC domain-containing protein 1A (323 aa).

A C2HC/C3H-type 1 zinc finger spans residues 7-36; the sequence is ELRPCKICGRTFFPATLKKHVPICQKTSVK. Zn(2+) is bound by residues C11, C14, H26, and C30. Residues 35-75 are disordered; the sequence is VKKRKTFESSRQRAEGTDINTVKPVKPRPEPPKKQSNWKRK. Residues 40–50 show a composition bias toward basic and acidic residues; sequence TFESSRQRAEG. The C2HC/C3H-type 2 zinc finger occupies 110-139; it reads DYVQCPYCQRRFNQNAADRHINFCKEQSAR. 4 residues coordinate Zn(2+): C114, C117, H129, and C133. Positions 138–273 are disordered; the sequence is ARMGQKIKGG…EAAMGYDSSD (136 aa). Over residues 208-226 the composition is skewed to polar residues; sequence KYQTQSPAHKNSTMVTSPQ.

It belongs to the ZC2HC1 family. The cofactor is Zn(2+).

The chain is Zinc finger C2HC domain-containing protein 1A (zc2hc1a) from Xenopus laevis (African clawed frog).